A 22-amino-acid polypeptide reads, in one-letter code: Chitin-binding protein 3 (22 aa).

Post-translationally, glycosylated; contains 2.5% carbohydrates.

Functionally, chitin-binding protein. Has antifungal activity against F.solani, F.oxysporum, C.musae and C.gloesporoides but not against P.oligandrum. Depending on concentration the antifungal activity can be fungistatic or fungicidal. Inhibits both spore germination and mycelial growth in F.solani at a concentration of 0.1 mg/ml. Has antifungal activity against C.krusei, C.albicans, C.tropicalis and C.parapsilosis. Has no chitinase, beta-glucanase or hemagglutinating activity. Acts as a flocculent. This is Chitin-binding protein 3 from Moringa oleifera (Horseradish tree).